The chain runs to 188 residues: Peptide deformylase (188 aa).

Fe cation is bound by residues cysteine 107 and histidine 149. The active site involves glutamate 150. Histidine 153 contributes to the Fe cation binding site.

The protein belongs to the polypeptide deformylase family. Fe(2+) is required as a cofactor.

The catalysed reaction is N-terminal N-formyl-L-methionyl-[peptide] + H2O = N-terminal L-methionyl-[peptide] + formate. In terms of biological role, removes the formyl group from the N-terminal Met of newly synthesized proteins. Requires at least a dipeptide for an efficient rate of reaction. N-terminal L-methionine is a prerequisite for activity but the enzyme has broad specificity at other positions. This chain is Peptide deformylase, found in Thermosynechococcus vestitus (strain NIES-2133 / IAM M-273 / BP-1).